A 201-amino-acid chain; its full sequence is Small ribosomal subunit protein uS4c (201 aa).

An S4 RNA-binding domain is found at 91–151; sequence MRLDNIIFQL…TKNPEELRTI (61 aa).

It belongs to the universal ribosomal protein uS4 family. In terms of assembly, part of the 30S ribosomal subunit. Contacts protein S5. The interaction surface between S4 and S5 is involved in control of translational fidelity.

Its subcellular location is the plastid. It localises to the chloroplast. In terms of biological role, one of the primary rRNA binding proteins, it binds directly to 16S rRNA where it nucleates assembly of the body of the 30S subunit. Its function is as follows. With S5 and S12 plays an important role in translational accuracy. This is Small ribosomal subunit protein uS4c (rps4) from Welwitschia mirabilis (Tree tumbo).